Here is a 391-residue protein sequence, read N- to C-terminus: Glycerophosphocholine acyltransferase 1 (391 aa).

The Cytoplasmic portion of the chain corresponds to 1–66 (MSNNEDPINE…IAKQAEEHES (66 aa)). Residues 67–87 (FINKVTHLLGVLGFGGFCFLL) form a helical membrane-spanning segment. The Lumenal portion of the chain corresponds to 88–92 (GARPQ). A helical transmembrane segment spans residues 93–113 (DIPYVYCLFFFIFVPLRWIYY). Over 114 to 119 (RFKKWH) the chain is Cytoplasmic. The helical transmembrane segment at 120 to 140 (YFLLDFCYYANTIFLVDLLLY) threads the bilayer. Residues 141–144 (PKDE) are Lumenal-facing. Residues 145–165 (KLFMVCFSFAEGPLAWALIVW) traverse the membrane as a helical segment. The Cytoplasmic portion of the chain corresponds to 166–172 (RCSLVFS). The helical transmembrane segment at 173–193 (SVDKIVSVLIHLLPGLVFFTI) threads the bilayer. Residues 194-226 (RWWNPATFEAMHPEGTSGRASWPYVEDKSFLFT) are Lumenal-facing. The helical transmembrane segment at 227–247 (WLFLVPLVAYFLWQLLYFLIV) threads the bilayer. Residues 248-294 (NVLRRQRLLRDPEVMTSYRELSKKAQKANNVWWRLSGLLGDQNRMLM) lie on the Cytoplasmic side of the membrane. A helical membrane pass occupies residues 295 to 315 (YILLQALFTVATTALTVPIFL). Topologically, residues 316–318 (SYE) are lumenal. The chain crosses the membrane as a helical span at residues 319–339 (LHAVFQILKVSAAVWNGGSFL). The Cytoplasmic segment spans residues 340–391 (LDVMPRQVILKEKKKSELQPAHIQQYHSEPKQDQSPNSMEIRMKTIHSAEEQ). Residues 354 to 391 (KSELQPAHIQQYHSEPKQDQSPNSMEIRMKTIHSAEEQ) form a disordered region. Positions 380 to 391 (IRMKTIHSAEEQ) are enriched in basic and acidic residues.

This sequence belongs to the GPC1 family.

It localises to the membrane. It catalyses the reaction sn-glycerol 3-phosphocholine + an acyl-CoA = a monoacyl-sn-glycero-3-phosphocholine + CoA. The catalysed reaction is sn-glycero-3-phosphoethanolamine + an acyl-CoA = a monoacyl-sn-glycero-3-phosphoethanolamine + CoA. It carries out the reaction sn-glycerol 3-phosphocholine + hexadecanoyl-CoA = hexadecanoyl-sn-glycero-3-phosphocholine + CoA. The enzyme catalyses (9Z)-hexadecenoyl-CoA + sn-glycerol 3-phosphocholine = (9Z-hexadecenoyl)-sn-glycero-3-phosphocholine + CoA. It catalyses the reaction (9Z,12Z)-octadecadienoyl-CoA + sn-glycerol 3-phosphocholine = (9Z,12Z-octadecadienoyl)-sn-glycero-3-phosphocholine + CoA. The catalysed reaction is (12R)-hydroxy-(9Z)-octadecenoyl-CoA + sn-glycerol 3-phosphocholine = (12R-hydroxy-9Z-octadecenoyl)-sn-glycero-3-phosphocholine + CoA. It carries out the reaction (9Z,12Z,15Z)-octadecatrienoyl-CoA + sn-glycerol 3-phosphocholine = (9Z,12Z,15Z-octadecatrienoyl)-sn-glycero-3-phosphocholine + CoA. The enzyme catalyses sn-glycerol 3-phosphocholine + (9Z)-octadecenoyl-CoA = (9Z-octadecenoyl)-sn-glycero-3-phosphocholine + CoA. In terms of biological role, glycerophosphocholine acyltransferase (GPCAT) that utilizes acyl-CoA to acylate glycero-3-phosphocholine (GPC), forming lysophosphatidylcholine (LPC). Shows broad acyl specificities with a preference for 16:0-CoA, polyunsaturated acyl-CoA, and the hydroxylated ricinoleoyl-CoA. Also catalyzes the acylation of glycero-3-phosphoethanolamine (GPE) with acyl-CoA. In addition to acyl-CoA, GPCAT efficiently utilizes LPC and lysophosphatidylethanolamine (LPE) as acyl donors in the acylation of GPC. Contributes to the maintenance of phosphatidylcholine (PC) homeostasis and might also have specific functions in acyl editing of PC, such as transferring acyl groups modified at the sn-2 position of PC to the sn-1. This is Glycerophosphocholine acyltransferase 1 from Ricinus communis (Castor bean).